Reading from the N-terminus, the 324-residue chain is Phospho-N-acetylmuramoyl-pentapeptide-transferase (324 aa).

10 helical membrane-spanning segments follow: residues 5–25, 52–72, 77–97, 117–137, 147–167, 176–196, 203–223, 227–247, 250–270, and 302–322; these read VILF…PIFI, PTMG…VMTM, VSMN…LGFL, LIGQ…QGMP, LSFD…VGGS, LDGL…ILAW, VAIF…FNAH, VFMG…IAIL, LEIL…SVIL, and VVVT…YIEV.

This sequence belongs to the glycosyltransferase 4 family. MraY subfamily. The cofactor is Mg(2+).

It is found in the cell membrane. It carries out the reaction UDP-N-acetyl-alpha-D-muramoyl-L-alanyl-gamma-D-glutamyl-meso-2,6-diaminopimeloyl-D-alanyl-D-alanine + di-trans,octa-cis-undecaprenyl phosphate = di-trans,octa-cis-undecaprenyl diphospho-N-acetyl-alpha-D-muramoyl-L-alanyl-D-glutamyl-meso-2,6-diaminopimeloyl-D-alanyl-D-alanine + UMP. It functions in the pathway cell wall biogenesis; peptidoglycan biosynthesis. In terms of biological role, catalyzes the initial step of the lipid cycle reactions in the biosynthesis of the cell wall peptidoglycan: transfers peptidoglycan precursor phospho-MurNAc-pentapeptide from UDP-MurNAc-pentapeptide onto the lipid carrier undecaprenyl phosphate, yielding undecaprenyl-pyrophosphoryl-MurNAc-pentapeptide, known as lipid I. This Bacillus licheniformis (strain ATCC 14580 / DSM 13 / JCM 2505 / CCUG 7422 / NBRC 12200 / NCIMB 9375 / NCTC 10341 / NRRL NRS-1264 / Gibson 46) protein is Phospho-N-acetylmuramoyl-pentapeptide-transferase.